Here is a 255-residue protein sequence, read N- to C-terminus: uncharacterized protein (255 aa).

The protein belongs to the methyltransferase superfamily.

This is an uncharacterized protein from Mycolicibacterium paratuberculosis (strain ATCC BAA-968 / K-10) (Mycobacterium paratuberculosis).